A 227-amino-acid polypeptide reads, in one-letter code: Cytochrome c oxidase subunit 2 (227 aa).

At 1 to 14 (MAYPFQLGFQDATS) the chain is on the mitochondrial intermembrane side. The helical transmembrane segment at 15-45 (PIMEELLHFHDHTLMIVFLISSLVLYIISLM) threads the bilayer. Over 46–59 (LTTKLTHTSTMDAQ) the chain is Mitochondrial matrix. The chain crosses the membrane as a helical span at residues 60 to 87 (EVETIWTILPAIILILIALPSLRILYMM). Topologically, residues 88–227 (DEINNPSLTV…HFEKWSASML (140 aa)) are mitochondrial intermembrane. Cu cation contacts are provided by H161, C196, E198, C200, H204, and M207. E198 contacts Mg(2+).

Belongs to the cytochrome c oxidase subunit 2 family. As to quaternary structure, component of the cytochrome c oxidase (complex IV, CIV), a multisubunit enzyme composed of 14 subunits. The complex is composed of a catalytic core of 3 subunits MT-CO1, MT-CO2 and MT-CO3, encoded in the mitochondrial DNA, and 11 supernumerary subunits COX4I, COX5A, COX5B, COX6A, COX6B, COX6C, COX7A, COX7B, COX7C, COX8 and NDUFA4, which are encoded in the nuclear genome. The complex exists as a monomer or a dimer and forms supercomplexes (SCs) in the inner mitochondrial membrane with NADH-ubiquinone oxidoreductase (complex I, CI) and ubiquinol-cytochrome c oxidoreductase (cytochrome b-c1 complex, complex III, CIII), resulting in different assemblies (supercomplex SCI(1)III(2)IV(1) and megacomplex MCI(2)III(2)IV(2)). Found in a complex with TMEM177, COA6, COX18, COX20, SCO1 and SCO2. Interacts with TMEM177 in a COX20-dependent manner. Interacts with COX20. Interacts with COX16. The cofactor is Cu cation.

It localises to the mitochondrion inner membrane. It carries out the reaction 4 Fe(II)-[cytochrome c] + O2 + 8 H(+)(in) = 4 Fe(III)-[cytochrome c] + 2 H2O + 4 H(+)(out). Component of the cytochrome c oxidase, the last enzyme in the mitochondrial electron transport chain which drives oxidative phosphorylation. The respiratory chain contains 3 multisubunit complexes succinate dehydrogenase (complex II, CII), ubiquinol-cytochrome c oxidoreductase (cytochrome b-c1 complex, complex III, CIII) and cytochrome c oxidase (complex IV, CIV), that cooperate to transfer electrons derived from NADH and succinate to molecular oxygen, creating an electrochemical gradient over the inner membrane that drives transmembrane transport and the ATP synthase. Cytochrome c oxidase is the component of the respiratory chain that catalyzes the reduction of oxygen to water. Electrons originating from reduced cytochrome c in the intermembrane space (IMS) are transferred via the dinuclear copper A center (CU(A)) of subunit 2 and heme A of subunit 1 to the active site in subunit 1, a binuclear center (BNC) formed by heme A3 and copper B (CU(B)). The BNC reduces molecular oxygen to 2 water molecules using 4 electrons from cytochrome c in the IMS and 4 protons from the mitochondrial matrix. This Ceratotherium simum (White rhinoceros) protein is Cytochrome c oxidase subunit 2 (MT-CO2).